A 119-amino-acid polypeptide reads, in one-letter code: Large ribosomal subunit protein bL20 (119 aa).

It belongs to the bacterial ribosomal protein bL20 family.

Its function is as follows. Binds directly to 23S ribosomal RNA and is necessary for the in vitro assembly process of the 50S ribosomal subunit. It is not involved in the protein synthesizing functions of that subunit. The chain is Large ribosomal subunit protein bL20 from Stenotrophomonas maltophilia (strain R551-3).